The chain runs to 337 residues: MTVKVGINGFGRIGRIVFRNAVEHPDVEIVAVNDPFIEPKYAEYMLKYDSTHGVFKGTIQVSGSDLIVNGKTVKFYTERDPSAIPWKDTGAEYIVESTGVFTTTEKASAHLKGGAKRVIISAPSADAPMYVMGVNEKTYDGKAAVISNASCTTNCLAPLAKVVNDKFGIVEGLMTTVHSYTATQKTVDGPSAKDWRGGRGAAQNIIPSSTGAAKAVGKVIPELNGKLTGMAFRVPTSNVSVVDLTCRLEKPASYETIKAALKEASEGELKGILGYTEDEIVSSDLNGNANSSIFDAKAGISLNDNFVKLVSWYDNEWGYSRRVLDLLSYVAKYDASH.

Residues 12–13 (RI), aspartate 34, and arginine 79 each bind NAD(+). Residues 150–152 (SCT), threonine 181, 210–211 (TG), and arginine 233 each bind D-glyceraldehyde 3-phosphate. Cysteine 151 functions as the Nucleophile in the catalytic mechanism. Asparagine 315 serves as a coordination point for NAD(+).

The protein belongs to the glyceraldehyde-3-phosphate dehydrogenase family. As to quaternary structure, homotetramer.

The protein localises to the cytoplasm. The catalysed reaction is D-glyceraldehyde 3-phosphate + phosphate + NAD(+) = (2R)-3-phospho-glyceroyl phosphate + NADH + H(+). Its pathway is carbohydrate degradation; glycolysis; pyruvate from D-glyceraldehyde 3-phosphate: step 1/5. The protein is Glyceraldehyde-3-phosphate dehydrogenase (GPD) of Podospora anserina (Pleurage anserina).